We begin with the raw amino-acid sequence, 955 residues long: Kinesin-like protein KIN-14L (955 aa).

Positions 19-140 (AARRFQAVQW…CILGLKAYHE (122 aa)) constitute a Calponin-homology (CH) domain. The 323-residue stretch at 363-685 (NIRVYCRVRP…LKFAQRVSTV (323 aa)) folds into the Kinesin motor domain. An ATP-binding site is contributed by 445-452 (GQTGSGKT). Residues 692–719 (AHKETREVMHLKEQIENLKRALGTEEWN) are a coiled coil. The interval 878–942 (RKENIPADPR…GKPIENGKKD (65 aa)) is disordered. Polar residues predominate over residues 894–916 (NNFSHIKSPDTSNAKTMRRQSLT).

This sequence belongs to the TRAFAC class myosin-kinesin ATPase superfamily. Kinesin family. KIN-14 subfamily.

In Arabidopsis thaliana (Mouse-ear cress), this protein is Kinesin-like protein KIN-14L.